A 309-amino-acid chain; its full sequence is Taste receptor type 2 member 20 (309 aa).

At 1 to 6 (MMSFLH) the chain is on the extracellular side. The chain crosses the membrane as a helical span at residues 7–27 (IVFSILVVVAFILGNFANGFI). Over 28 to 46 (ALINFIAWVKRQKISSADQ) the chain is Cytoplasmic. A helical transmembrane segment spans residues 47 to 67 (IIAALAVSRVGLLWVILLHWY). Over 68–79 (STVLNPTSSNLK) the chain is Extracellular. The chain crosses the membrane as a helical span at residues 80 to 100 (VIIFISNAWAVTNHFSIWLAT). The Cytoplasmic segment spans residues 101–125 (SLSIFYLLKIVNFSRLIFHHLKRKA). Residues 126–146 (KSVVLVIVLGSLFFLVCHLVM) traverse the membrane as a helical segment. Over 147–178 (KNTYINVWTEECEGNVTWKIKLRNAMHLSNLT) the chain is Extracellular. The helical transmembrane segment at 179–199 (VAMLANLIPFTLTLISFLLLI) threads the bilayer. At 200–229 (YSLCKHLKKMQLHGKGSQDPSTKIHIKALQ) the chain is on the cytoplasmic side. The helical transmembrane segment at 230-250 (TVTSFLILLAIYFLCLITSFW) threads the bilayer. At 251-259 (NSKMRPKEI) the chain is on the extracellular side. A helical transmembrane segment spans residues 260 to 280 (VLMLCQAFGIIYPSFHSFILI). Over 281 to 309 (WGNKTLKQTFLSVLWQVTCWAKGQNQSTP) the chain is Cytoplasmic.

It belongs to the G-protein coupled receptor T2R family.

It localises to the membrane. In terms of biological role, receptor that may play a role in the perception of bitterness and is gustducin-linked. May play a role in sensing the chemical composition of the gastrointestinal content. The activity of this receptor may stimulate alpha gustducin, mediate PLC-beta-2 activation and lead to the gating of TRPM5. This Pan paniscus (Pygmy chimpanzee) protein is Taste receptor type 2 member 20 (TAS2R20).